Here is a 158-residue protein sequence, read N- to C-terminus: EOLA-like protein (158 aa).

An ASCH domain is found at 6 to 92 (LSFRQPYAGF…IAGLVDIGET (87 aa)).

It belongs to the EOLA family.

This is EOLA-like protein from Pongo abelii (Sumatran orangutan).